A 152-amino-acid polypeptide reads, in one-letter code: Ribosome maturation factor RimP (152 aa).

It belongs to the RimP family.

Its subcellular location is the cytoplasm. Functionally, required for maturation of 30S ribosomal subunits. The sequence is that of Ribosome maturation factor RimP from Desulfatibacillum aliphaticivorans.